A 373-amino-acid chain; its full sequence is Dual-specificity RNA methyltransferase RlmN (373 aa).

The active-site Proton acceptor is Glu94. The Radical SAM core domain occupies 100 to 339; that stretch reads EDDRATLCVS…VIVRKTRGDD (240 aa). A disulfide bridge connects residues Cys107 and Cys344. [4Fe-4S] cluster is bound by residues Cys114, Cys118, and Cys121. S-adenosyl-L-methionine-binding positions include 168–169, Ser200, 222–224, and Asn301; these read GE and SIH. Catalysis depends on Cys344, which acts as the S-methylcysteine intermediate.

It belongs to the radical SAM superfamily. RlmN family. [4Fe-4S] cluster serves as cofactor.

It localises to the cytoplasm. It carries out the reaction adenosine(2503) in 23S rRNA + 2 reduced [2Fe-2S]-[ferredoxin] + 2 S-adenosyl-L-methionine = 2-methyladenosine(2503) in 23S rRNA + 5'-deoxyadenosine + L-methionine + 2 oxidized [2Fe-2S]-[ferredoxin] + S-adenosyl-L-homocysteine. The enzyme catalyses adenosine(37) in tRNA + 2 reduced [2Fe-2S]-[ferredoxin] + 2 S-adenosyl-L-methionine = 2-methyladenosine(37) in tRNA + 5'-deoxyadenosine + L-methionine + 2 oxidized [2Fe-2S]-[ferredoxin] + S-adenosyl-L-homocysteine. In terms of biological role, specifically methylates position 2 of adenine 2503 in 23S rRNA and position 2 of adenine 37 in tRNAs. m2A2503 modification seems to play a crucial role in the proofreading step occurring at the peptidyl transferase center and thus would serve to optimize ribosomal fidelity. The protein is Dual-specificity RNA methyltransferase RlmN of Shewanella baltica (strain OS155 / ATCC BAA-1091).